A 319-amino-acid polypeptide reads, in one-letter code: 1-aminocyclopropane-1-carboxylate oxidase (319 aa).

The 101-residue stretch at 153–253 folds into the Fe2OG dioxygenase domain; it reads PTFGTKVSNY…RMSIASFYNP (101 aa). H177, D179, and H234 together coordinate Fe cation.

Belongs to the iron/ascorbate-dependent oxidoreductase family. Fe cation serves as cofactor.

The catalysed reaction is 1-aminocyclopropane-1-carboxylate + L-ascorbate + O2 = ethene + L-dehydroascorbate + hydrogen cyanide + CO2 + 2 H2O. Its pathway is alkene biosynthesis; ethylene biosynthesis via S-adenosyl-L-methionine; ethylene from S-adenosyl-L-methionine: step 2/2. This Actinidia deliciosa (Kiwi) protein is 1-aminocyclopropane-1-carboxylate oxidase (ACO).